Reading from the N-terminus, the 340-residue chain is Glucokinase (340 aa).

G17–T22 is a binding site for ATP.

It belongs to the bacterial glucokinase family.

The protein localises to the cytoplasm. It carries out the reaction D-glucose + ATP = D-glucose 6-phosphate + ADP + H(+). In Agrobacterium fabrum (strain C58 / ATCC 33970) (Agrobacterium tumefaciens (strain C58)), this protein is Glucokinase.